The primary structure comprises 120 residues: Large ribosomal subunit protein uL18 (120 aa).

It belongs to the universal ribosomal protein uL18 family. In terms of assembly, part of the 50S ribosomal subunit; part of the 5S rRNA/L5/L18/L25 subcomplex. Contacts the 5S and 23S rRNAs.

In terms of biological role, this is one of the proteins that bind and probably mediate the attachment of the 5S RNA into the large ribosomal subunit, where it forms part of the central protuberance. In Beijerinckia indica subsp. indica (strain ATCC 9039 / DSM 1715 / NCIMB 8712), this protein is Large ribosomal subunit protein uL18.